We begin with the raw amino-acid sequence, 470 residues long: MPVDINRLTDGWLELESDPGLFTLLLEDFGVKGVQVEEIYDLQKTIEGPVFGFIFLFRWIEERRARRKIVETTTEMYVKDEEAVNSIFFAHQVVPNSCATHALLSVLLNCSDIDLGTTLSRLKVHTKGMCPDNKGWAIGNTPELACAHNSHAMPQARRRMDRNSGVSTGRFTGEAFHFVSFCPINGHLFELDGLKPFPMDHGPWGEKEDWTDKFRRVMSDRLGISTDRRIAITHKLKMLRTNQTIVSAALEKLLKSKQLESRSQAEIRETVDKIKKEEQESTVKLSSEYSQLLEMHEKDEPAVAMSKELESLVSLNSSSDSVEIIGETEIKKENPPPSPPPAFIGAGTFSPKDLLSLLKNLESEINITEQHLCDENEKRAMFKVDDCRRTHNYDEFICTFLSMLAYQGELGDLVTQHLVTSRKPSLGGVQNSGSRGVVRNYNKKSTTNGSSPKTPSSKRRRGRTKYRKRK.

Positions 11 to 241 constitute a UCH catalytic domain; sequence GWLELESDPG…ITHKLKMLRT (231 aa). Cys-98 acts as the Nucleophile in catalysis. His-177 acts as the Proton donor in catalysis. Residues 260-280 are a coiled coil; the sequence is ESRSQAEIRETVDKIKKEEQE. A ULD domain is found at 392–420; the sequence is NYDEFICTFLSMLAYQGELGDLVTQHLVT. Residues 422 to 470 form a positively charged C-terminal tail required for binding nucleosomes region; sequence RKPSLGGVQNSGSRGVVRNYNKKSTTNGSSPKTPSSKRRRGRTKYRKRK. Over residues 423 to 434 the composition is skewed to polar residues; it reads KPSLGGVQNSGS. The interval 423-470 is disordered; the sequence is KPSLGGVQNSGSRGVVRNYNKKSTTNGSSPKTPSSKRRRGRTKYRKRK. Positions 456–470 are enriched in basic residues; it reads SSKRRRGRTKYRKRK.

This sequence belongs to the peptidase C12 family. BAP1 subfamily. Catalytic component of the polycomb repressive deubiquitinase (PR-DUB) complex, at least composed of caly/calypso, Asx and sba (MBD5/6 homolog). The PR-DUB complex associates with nucleosomes to mediate deubiquitination of histone H2AK118ub1 substrates; the association requires the positively charged C-terminal tail of caly, probably due to direct binding of DNA. Interacts (via ULD domain) with Asx (via DEUBAD domain); the interaction produces a stable heterodimer with a composite binding site for ubiquitin. Homodimerizes (via coiled-coil hinge-region between the UCH and ULD domains) to mediate assembly of 2 copies of the caly-Asx heterodimer into a bisymmetric tetramer; dimerization enhances PR-DUB association with nucleosomes.

The protein localises to the nucleus. It carries out the reaction Thiol-dependent hydrolysis of ester, thioester, amide, peptide and isopeptide bonds formed by the C-terminal Gly of ubiquitin (a 76-residue protein attached to proteins as an intracellular targeting signal).. Catalytic component of the polycomb repressive deubiquitinase (PR-DUB) complex, a complex that specifically mediates deubiquitination of histone H2A monoubiquitinated at 'Lys-119' (H2AK118ub1). Mediates bisymmetric organization of the PR-DUB complex and is involved in association with nucleosomes to mediate deubiquitination. Does not deubiquitinate monoubiquitinated histone H2B. Required to maintain the transcriptionally repressive state of homeotic genes throughout development. The PR-DUB complex has weak or no activity toward 'Lys-48'- and 'Lys-63'-linked polyubiquitin chains. Polycomb group (PcG) protein. The protein is Ubiquitin carboxyl-terminal hydrolase calypso of Culex quinquefasciatus (Southern house mosquito).